We begin with the raw amino-acid sequence, 64 residues long: Conotoxin Ca5.3 (64 aa).

A signal peptide spans 1-22 (MRCVPVFIILLLLIASAPGVDA). The propeptide occupies 23–48 (QPKTKYNAPLTSLHDNAKGILQEHWN). Ile61 carries the post-translational modification Isoleucine amide.

It belongs to the conotoxin T superfamily. In terms of processing, contains 2 disulfide bonds that can be either 'C1-C3, C2-C4' or 'C1-C4, C2-C3', since these disulfide connectivities have been observed for conotoxins with cysteine framework V (for examples, see AC P0DQQ7 and AC P81755). As to expression, expressed by the venom duct.

It is found in the secreted. The protein is Conotoxin Ca5.3 of Conus caracteristicus (Characteristic cone).